The following is a 450-amino-acid chain: Probable ATP-dependent RNA helicase MG425 homolog (450 aa).

Positions 3-31 match the Q motif motif; it reads STFNELGVSPALIATLKDNNINQPTTIQQ. In terms of domain architecture, Helicase ATP-binding spans 34-206; sequence IPQFLQHQNL…KQITKNGIFL (173 aa). Residue 47–54 participates in ATP binding; that stretch reads SPTGTGKT. The short motif at 154-157 is the DEVD box element; it reads DEVD. A Helicase C-terminal domain is found at 234–384; sequence RKKQALYSLV…PLRPMRLRLI (151 aa). The interval 429–450 is disordered; that stretch reads MRQPERDMQKNKLHDSDWQSNM. Positions 430 to 450 are enriched in basic and acidic residues; the sequence is RQPERDMQKNKLHDSDWQSNM.

This sequence belongs to the DEAD box helicase family.

It carries out the reaction ATP + H2O = ADP + phosphate + H(+). The chain is Probable ATP-dependent RNA helicase MG425 homolog from Mycoplasma pneumoniae (strain ATCC 29342 / M129 / Subtype 1) (Mycoplasmoides pneumoniae).